Here is a 122-residue protein sequence, read N- to C-terminus: Basic phospholipase A2 (122 aa).

Cystine bridges form between Cys-26–Cys-115, Cys-28–Cys-44, Cys-43–Cys-95, Cys-49–Cys-122, Cys-50–Cys-88, Cys-57–Cys-81, and Cys-75–Cys-86. 3 residues coordinate Ca(2+): Tyr-27, Gly-29, and Gly-31. His-47 is an active-site residue. Asp-48 is a Ca(2+) binding site. Residue Asp-89 is part of the active site.

It belongs to the phospholipase A2 family. Group II subfamily. D49 sub-subfamily. Homodimer. Ca(2+) serves as cofactor. As to expression, expressed by the venom gland.

It is found in the secreted. The enzyme catalyses a 1,2-diacyl-sn-glycero-3-phosphocholine + H2O = a 1-acyl-sn-glycero-3-phosphocholine + a fatty acid + H(+). Its function is as follows. Snake venom phospholipase A2 (PLA2) that inhibits neuromuscular transmission by blocking acetylcholine release from the nerve termini. PLA2 catalyzes the calcium-dependent hydrolysis of the 2-acyl groups in 3-sn-phosphoglycerides. This Gloydius blomhoffii (Mamushi) protein is Basic phospholipase A2.